A 120-amino-acid chain; its full sequence is Holo-[acyl-carrier-protein] synthase (120 aa).

Residues D6 and E55 each contribute to the Mg(2+) site.

Belongs to the P-Pant transferase superfamily. AcpS family. The cofactor is Mg(2+).

The protein localises to the cytoplasm. The enzyme catalyses apo-[ACP] + CoA = holo-[ACP] + adenosine 3',5'-bisphosphate + H(+). Transfers the 4'-phosphopantetheine moiety from coenzyme A to a Ser of acyl-carrier-protein. This chain is Holo-[acyl-carrier-protein] synthase, found in Pelodictyon phaeoclathratiforme (strain DSM 5477 / BU-1).